The sequence spans 495 residues: N-succinylglutamate 5-semialdehyde dehydrogenase (495 aa).

220 to 225 (GSAGTG) provides a ligand contact to NAD(+). Catalysis depends on residues glutamate 243 and cysteine 277.

Belongs to the aldehyde dehydrogenase family. AstD subfamily.

The catalysed reaction is N-succinyl-L-glutamate 5-semialdehyde + NAD(+) + H2O = N-succinyl-L-glutamate + NADH + 2 H(+). It participates in amino-acid degradation; L-arginine degradation via AST pathway; L-glutamate and succinate from L-arginine: step 4/5. Its function is as follows. Catalyzes the NAD-dependent reduction of succinylglutamate semialdehyde into succinylglutamate. The chain is N-succinylglutamate 5-semialdehyde dehydrogenase from Enterobacter sp. (strain 638).